Reading from the N-terminus, the 168-residue chain is Transcription antitermination protein NusB (168 aa).

Belongs to the NusB family.

Functionally, involved in transcription antitermination. Required for transcription of ribosomal RNA (rRNA) genes. Binds specifically to the boxA antiterminator sequence of the ribosomal RNA (rrn) operons. This chain is Transcription antitermination protein NusB, found in Deinococcus deserti (strain DSM 17065 / CIP 109153 / LMG 22923 / VCD115).